We begin with the raw amino-acid sequence, 356 residues long: 3-dehydroquinate synthase (356 aa).

NAD(+) contacts are provided by residues 101–105 (GVIGD), 125–126 (TT), lysine 138, and lysine 147. Glutamate 180, histidine 243, and histidine 260 together coordinate Zn(2+).

It belongs to the sugar phosphate cyclases superfamily. Dehydroquinate synthase family. The cofactor is Co(2+). Requires Zn(2+) as cofactor. It depends on NAD(+) as a cofactor.

It is found in the cytoplasm. It catalyses the reaction 7-phospho-2-dehydro-3-deoxy-D-arabino-heptonate = 3-dehydroquinate + phosphate. It functions in the pathway metabolic intermediate biosynthesis; chorismate biosynthesis; chorismate from D-erythrose 4-phosphate and phosphoenolpyruvate: step 2/7. Catalyzes the conversion of 3-deoxy-D-arabino-heptulosonate 7-phosphate (DAHP) to dehydroquinate (DHQ). The polypeptide is 3-dehydroquinate synthase (Alkaliphilus metalliredigens (strain QYMF)).